Reading from the N-terminus, the 151-residue chain is Globin CTT-IIIA (151 aa).

In terms of domain architecture, Globin spans 8–147 (SMTDAQVAAV…MFHVIFNALD (140 aa)). His-98 is a binding site for heme b.

The protein belongs to the globin family. Monomer.

The chain is Globin CTT-IIIA from Chironomus thummi thummi (Midge).